The sequence spans 88 residues: Small ribosomal subunit protein uS15 (88 aa).

It belongs to the universal ribosomal protein uS15 family. In terms of assembly, part of the 30S ribosomal subunit. Forms a bridge to the 50S subunit in the 70S ribosome, contacting the 23S rRNA.

Functionally, one of the primary rRNA binding proteins, it binds directly to 16S rRNA where it helps nucleate assembly of the platform of the 30S subunit by binding and bridging several RNA helices of the 16S rRNA. Forms an intersubunit bridge (bridge B4) with the 23S rRNA of the 50S subunit in the ribosome. The chain is Small ribosomal subunit protein uS15 from Mesomycoplasma flocculare (Mycoplasma flocculare).